We begin with the raw amino-acid sequence, 503 residues long: Maturase K (503 aa).

The protein belongs to the intron maturase 2 family. MatK subfamily.

The protein resides in the plastid. It localises to the chloroplast. In terms of biological role, usually encoded in the trnK tRNA gene intron. Probably assists in splicing its own and other chloroplast group II introns. The chain is Maturase K from Stangeria eriopus (Natal grass cycad).